Reading from the N-terminus, the 570-residue chain is MSTPQKTAGGNNAYHNFYNDFLHIKDPNERRRLALAEVDRAPFGWYHVRAVAVAGVGFFTDSYDIFTVSLLTLMLGIVYFPGEGKMPTTSDTAIKLATSAGTVIGQVGFGAAADVFGRKSMYGLELLFIIFATLAQALASGSPSINIIGIIIFWRVLMGVGIGGDYPLSSIITSEFATTKWRGAMMGAVFAMQGLGQLAAAFVMLFVTLGFKKSLEAAPTLASCTGDCAVAVDKMWRTVIGVGAVPGCIALYYRLTIPETPRYTFDVKRDVEQASDDIEAFKTGKPKGQPDEATRIVAKQEAEKEMEIPKASWGDFFRHYSKRKNAMLLAGTALSWCFLDIAYYGVSLNNATILNVIGYSTTGAKNTYEILYNTAVGNLIIVLAGAVPGYWVTVFTVDTVGRKPIQFMGFGILTILFVVMGFAYKHLSPHALLAIFVLAQFFFNFGPNATTFIVPGEVFPTRYRSTSHGLSAAMGKIGSIIGQGAIAPLRTRGAVKGGNPNPWMNHVLEIYALFMLLGVGTTFLIPETKRKTLEELSGEFDMSGEEEAQRDTTLTEHKTEAPTSSAAVNA.

Topologically, residues 1–61 are cytoplasmic; sequence MSTPQKTAGG…AVAGVGFFTD (61 aa). A helical transmembrane segment spans residues 62-82; it reads SYDIFTVSLLTLMLGIVYFPG. The Extracellular segment spans residues 83–95; sequence EGKMPTTSDTAIK. A helical membrane pass occupies residues 96–116; it reads LATSAGTVIGQVGFGAAADVF. The Cytoplasmic portion of the chain corresponds to 117 to 120; it reads GRKS. The helical transmembrane segment at 121–141 threads the bilayer; that stretch reads MYGLELLFIIFATLAQALASG. Topologically, residues 142 to 143 are extracellular; the sequence is SP. A helical membrane pass occupies residues 144 to 164; it reads SINIIGIIIFWRVLMGVGIGG. Topologically, residues 165–186 are cytoplasmic; sequence DYPLSSIITSEFATTKWRGAMM. Residues 187-207 form a helical membrane-spanning segment; sequence GAVFAMQGLGQLAAAFVMLFV. The Extracellular portion of the chain corresponds to 208–237; it reads TLGFKKSLEAAPTLASCTGDCAVAVDKMWR. Residues 238–258 traverse the membrane as a helical segment; sequence TVIGVGAVPGCIALYYRLTIP. Residues 259-325 are Cytoplasmic-facing; it reads ETPRYTFDVK…FFRHYSKRKN (67 aa). The helical transmembrane segment at 326–346 threads the bilayer; sequence AMLLAGTALSWCFLDIAYYGV. Over 347 to 374 the chain is Extracellular; the sequence is SLNNATILNVIGYSTTGAKNTYEILYNT. A helical membrane pass occupies residues 375 to 395; the sequence is AVGNLIIVLAGAVPGYWVTVF. Over 396-403 the chain is Cytoplasmic; that stretch reads TVDTVGRK. A helical membrane pass occupies residues 404–424; that stretch reads PIQFMGFGILTILFVVMGFAY. Topologically, residues 425 to 433 are extracellular; it reads KHLSPHALL. The helical transmembrane segment at 434–454 threads the bilayer; sequence AIFVLAQFFFNFGPNATTFIV. Residues 455–468 lie on the Cytoplasmic side of the membrane; the sequence is PGEVFPTRYRSTSH. Residues 469 to 489 form a helical membrane-spanning segment; that stretch reads GLSAAMGKIGSIIGQGAIAPL. Topologically, residues 490 to 505 are extracellular; that stretch reads RTRGAVKGGNPNPWMN. Residues 506 to 526 form a helical membrane-spanning segment; that stretch reads HVLEIYALFMLLGVGTTFLIP. At 527–570 the chain is on the cytoplasmic side; the sequence is ETKRKTLEELSGEFDMSGEEEAQRDTTLTEHKTEAPTSSAAVNA. Residues 537-546 are compositionally biased toward acidic residues; the sequence is SGEFDMSGEE. A disordered region spans residues 537 to 570; that stretch reads SGEFDMSGEEEAQRDTTLTEHKTEAPTSSAAVNA. Positions 547–560 are enriched in basic and acidic residues; it reads EAQRDTTLTEHKTE. Residues 561–570 are compositionally biased toward polar residues; sequence APTSSAAVNA.

The protein belongs to the major facilitator superfamily. Sugar transporter (TC 2.A.1.1) family.

The protein resides in the cell membrane. With respect to regulation, phosphate transport activity is competitively inhibited by arsenate. Its function is as follows. High-affinity transporter for external inorganic phosphate. Acts probably as a H(+)-phosphate symporter. The polypeptide is Repressible high-affinity phosphate permease (Neurospora crassa (strain ATCC 24698 / 74-OR23-1A / CBS 708.71 / DSM 1257 / FGSC 987)).